The chain runs to 433 residues: Glucose-1-phosphate adenylyltransferase (433 aa).

Alpha-D-glucose 1-phosphate is bound by residues Tyr-117, Gly-182, 197–198 (EK), and Ser-215.

This sequence belongs to the bacterial/plant glucose-1-phosphate adenylyltransferase family. In terms of assembly, homotetramer.

It catalyses the reaction alpha-D-glucose 1-phosphate + ATP + H(+) = ADP-alpha-D-glucose + diphosphate. It functions in the pathway glycan biosynthesis; glycogen biosynthesis. In terms of biological role, involved in the biosynthesis of ADP-glucose, a building block required for the elongation reactions to produce glycogen. Catalyzes the reaction between ATP and alpha-D-glucose 1-phosphate (G1P) to produce pyrophosphate and ADP-Glc. This is Glucose-1-phosphate adenylyltransferase from Nitrosomonas europaea (strain ATCC 19718 / CIP 103999 / KCTC 2705 / NBRC 14298).